Consider the following 268-residue polypeptide: MALPEFSMRQLLEAGAHFGHQTHRWNPKMDRYIFGSRSNIHIIDLSQSIPLLHQALVKVREVAAAGGRVLFVGTKRQASDPVATAAKRCAQYYVNHRWLGGTLTNWRTVSGSIARLRELEGVLAGEGQGRSKKELLQLTRERDKLELSLGGIKDMGGIPDIMFVIDTNKEAIAILEARKLNIPVVAILDTNCDPDGITYPIPGNDDAARALQLYCDLIADAVLDGLAAGQAAAGVDLGASVAPVEPALARELAPEAPAAEAAPESAEG.

Belongs to the universal ribosomal protein uS2 family.

This Caulobacter vibrioides (strain ATCC 19089 / CIP 103742 / CB 15) (Caulobacter crescentus) protein is Small ribosomal subunit protein uS2.